The chain runs to 384 residues: Histidinol-phosphate aminotransferase (384 aa).

The residue at position 223 (K223) is an N6-(pyridoxal phosphate)lysine.

It belongs to the class-II pyridoxal-phosphate-dependent aminotransferase family. Pyridoxal 5'-phosphate serves as cofactor.

The catalysed reaction is L-histidinol phosphate + 2-oxoglutarate = 3-(imidazol-4-yl)-2-oxopropyl phosphate + L-glutamate. Its pathway is amino-acid biosynthesis; L-histidine biosynthesis; L-histidine from 5-phospho-alpha-D-ribose 1-diphosphate: step 7/9. This chain is Histidinol-phosphate aminotransferase (his3), found in Schizosaccharomyces pombe (strain 972 / ATCC 24843) (Fission yeast).